The sequence spans 218 residues: Glutathione S-transferase Mu 1 (218 aa).

In terms of domain architecture, GST N-terminal spans 2-88 (PMILGYWNVR…YLARKHHLCG (87 aa)). Glutathione is bound by residues 7–8 (YW), 43–46 (RSQW), lysine 50, and 59–60 (NL). Serine 67 carries the phosphoserine modification. A glutathione-binding site is contributed by 72–73 (QS). The 119-residue stretch at 90–208 (TEEERIRADI…KSSRYLSTPI (119 aa)) folds into the GST C-terminal domain. Tyrosine 116 is a binding site for substrate. Phosphoserine is present on residues serine 205 and serine 210.

It belongs to the GST superfamily. Mu family. As to quaternary structure, homodimer or heterodimer.

The protein resides in the cytoplasm. The enzyme catalyses RX + glutathione = an S-substituted glutathione + a halide anion + H(+). It carries out the reaction prostaglandin A2 + glutathione = prostaglandin A2-S-(R)-glutathione. It catalyses the reaction prostaglandin J2 + glutathione = prostaglandin J2-S-(R)-glutathione. The catalysed reaction is prostaglandin J2 + glutathione = prostaglandin J2-S-(S)-glutathione. The enzyme catalyses prostaglandin A2 + glutathione = prostaglandin A2-S-(S)-glutathione. It carries out the reaction 11(S)-hydroxy-14(S),15(S)-epoxy-(5Z,8Z,12E)-eicosatrienoate + glutathione = (11S,15S)-dihydroxy-14(R)-S-glutathionyl-(5Z,8Z,12E)-eicosatrienoate. Its function is as follows. Conjugation of reduced glutathione to a wide number of exogenous and endogenous hydrophobic electrophiles. The olfactory GST may be crucial for the acuity of the olfactory process. Participates in the formation of novel hepoxilin regioisomers. The chain is Glutathione S-transferase Mu 1 from Rattus norvegicus (Rat).